A 728-amino-acid chain; its full sequence is 1,4-alpha-glucan branching enzyme GlgB (728 aa).

Asp405 functions as the Nucleophile in the catalytic mechanism. The Proton donor role is filled by Glu458.

The protein belongs to the glycosyl hydrolase 13 family. GlgB subfamily. Monomer.

It catalyses the reaction Transfers a segment of a (1-&gt;4)-alpha-D-glucan chain to a primary hydroxy group in a similar glucan chain.. It participates in glycan biosynthesis; glycogen biosynthesis. Its function is as follows. Catalyzes the formation of the alpha-1,6-glucosidic linkages in glycogen by scission of a 1,4-alpha-linked oligosaccharide from growing alpha-1,4-glucan chains and the subsequent attachment of the oligosaccharide to the alpha-1,6 position. This Escherichia coli O6:K15:H31 (strain 536 / UPEC) protein is 1,4-alpha-glucan branching enzyme GlgB.